The primary structure comprises 353 residues: Peptide methionine sulfoxide reductase MsrA/MsrB (353 aa).

The interval 43–196 (REIYLAGGCF…PNGYCHIDIT (154 aa)) is peptide methionine sulfoxide reductase A. Cys51 is a catalytic residue. A MsrB domain is found at 213–336 (DAELKAKLTP…NSASIKFIPL (124 aa)). Cys325 serves as the catalytic Nucleophile.

It in the N-terminal section; belongs to the MsrA Met sulfoxide reductase family. This sequence in the C-terminal section; belongs to the MsrB Met sulfoxide reductase family.

The enzyme catalyses L-methionyl-[protein] + [thioredoxin]-disulfide + H2O = L-methionyl-(S)-S-oxide-[protein] + [thioredoxin]-dithiol. It catalyses the reaction [thioredoxin]-disulfide + L-methionine + H2O = L-methionine (S)-S-oxide + [thioredoxin]-dithiol. The catalysed reaction is L-methionyl-[protein] + [thioredoxin]-disulfide + H2O = L-methionyl-(R)-S-oxide-[protein] + [thioredoxin]-dithiol. Its function is as follows. Has an important function as a repair enzyme for proteins that have been inactivated by oxidation. Catalyzes the reversible oxidation-reduction of methionine sulfoxide in proteins to methionine. The polypeptide is Peptide methionine sulfoxide reductase MsrA/MsrB (msrAB) (Haemophilus influenzae (strain ATCC 51907 / DSM 11121 / KW20 / Rd)).